The chain runs to 490 residues: Sulfate adenylyltransferase (490 aa).

The tract at residues 1 to 165 (MTKALLKDLN…LQAVTPIRHF (165 aa)) is N-terminal. The interval 166–390 (DFVEYRYSPA…LRQSYPPKYS (225 aa)) is catalytic. Gln193 is a sulfate binding site. Residues 193–196 (QTRN) and 287–290 (GRDH) contribute to the ATP site. Catalysis depends on residues Thr194, Arg195, and Asn196. Arg195 is a binding site for sulfate. Ala291 serves as a coordination point for sulfate. Met329 is an ATP binding site. Thr356 is modified (phosphothreonine). The required for oligomerization; adenylyl-sulfate kinase-like stretch occupies residues 391 to 490 (QGFVLAVPAT…LSQLSDEGYL (100 aa)).

This sequence belongs to the sulfate adenylyltransferase family. As to quaternary structure, homohexamer. Dimer of trimers.

It is found in the cytoplasm. It carries out the reaction sulfate + ATP + H(+) = adenosine 5'-phosphosulfate + diphosphate. It participates in sulfur metabolism; hydrogen sulfide biosynthesis; sulfite from sulfate: step 1/3. Functionally, catalyzes the first intracellular reaction of sulfate assimilation, forming adenosine-5'-phosphosulfate (APS) from inorganic sulfate and ATP. Plays an important role in sulfate activation as a component of the biosynthesis pathway of sulfur-containing amino acids. In Schizosaccharomyces pombe (strain 972 / ATCC 24843) (Fission yeast), this protein is Sulfate adenylyltransferase (sua1).